The following is a 314-amino-acid chain: GTPase Era (314 aa).

In terms of domain architecture, Era-type G spans 7-188 (RCGFAAVIGS…REFIAGLMPE (182 aa)). Residues 15–22 (GSPNAGKS) are G1. 15–22 (GSPNAGKS) lines the GTP pocket. Residues 41–45 (QTTRF) are G2. The interval 62-65 (DTPG) is G3. Residues 62–66 (DTPGV) and 138–141 (NKVD) contribute to the GTP site. The tract at residues 138–141 (NKVD) is G4. Residues 167 to 169 (ISA) form a G5 region. Positions 219 to 296 (LHEELPYASM…HLFLNVKVDA (78 aa)) constitute a KH type-2 domain.

It belongs to the TRAFAC class TrmE-Era-EngA-EngB-Septin-like GTPase superfamily. Era GTPase family. In terms of assembly, monomer.

It localises to the cytoplasm. Its subcellular location is the cell inner membrane. An essential GTPase that binds both GDP and GTP, with rapid nucleotide exchange. Plays a role in 16S rRNA processing and 30S ribosomal subunit biogenesis and possibly also in cell cycle regulation and energy metabolism. This chain is GTPase Era, found in Maricaulis maris (strain MCS10) (Caulobacter maris).